Reading from the N-terminus, the 164-residue chain is V-type proton ATPase subunit c3 (164 aa).

The Lumenal segment spans residues 1–11 (MSTFSGDETAP). A helical membrane pass occupies residues 12-32 (FFGFLGAAAALVFSCMGAAYG). Over 33–54 (TAKSGVGVASMGVMRPELVMKS) the chain is Cytoplasmic. A helical transmembrane segment spans residues 55-75 (IVPVVMAGVLGIYGLIIAVII). Residues 76–94 (STGINPKAKSYYLFDGYAH) are Lumenal-facing. Residues 95–116 (LSSGLACGLAGLSAGMAIGIVG) traverse the membrane as a helical segment. At 117 to 128 (DAGVRANAQQPK) the chain is on the cytoplasmic side. A helical transmembrane segment spans residues 129–154 (LFVGMILILIFAEALALYGLIVGIIL). Residues 155 to 164 (SSRAGQSRAE) are Lumenal-facing.

Belongs to the V-ATPase proteolipid subunit family. V-ATPase is a heteromultimeric enzyme composed of a peripheral catalytic V1 complex (components A to H) attached to an integral membrane V0 proton pore complex (components: a, c, c'', d and e). The proteolipid components c and c'' are present as a hexameric ring that forms the proton-conducting pore. As to expression, expressed in leaf, root, flower and silique.

The protein resides in the vacuole membrane. Functionally, proton-conducting pore forming subunit of the membrane integral V0 complex of vacuolar ATPase. V-ATPase is responsible for acidifying a variety of intracellular compartments in eukaryotic cells. The protein is V-type proton ATPase subunit c3 (VHA-c3) of Arabidopsis thaliana (Mouse-ear cress).